A 483-amino-acid chain; its full sequence is UDP-N-acetylmuramoyl-L-alanyl-D-glutamate--2,6-diaminopimelate ligase (483 aa).

S30 contacts UDP-N-acetyl-alpha-D-muramoyl-L-alanyl-D-glutamate. 109–115 (GTNGKTT) is a binding site for ATP. UDP-N-acetyl-alpha-D-muramoyl-L-alanyl-D-glutamate is bound by residues 151-152 (TT), S178, and R186. K218 carries the N6-carboxylysine modification. Meso-2,6-diaminopimelate contacts are provided by residues R380, 403–406 (DNPR), G453, and E457. The short motif at 403-406 (DNPR) is the Meso-diaminopimelate recognition motif element.

This sequence belongs to the MurCDEF family. MurE subfamily. Mg(2+) is required as a cofactor. Post-translationally, carboxylation is probably crucial for Mg(2+) binding and, consequently, for the gamma-phosphate positioning of ATP.

The protein localises to the cytoplasm. It carries out the reaction UDP-N-acetyl-alpha-D-muramoyl-L-alanyl-D-glutamate + meso-2,6-diaminopimelate + ATP = UDP-N-acetyl-alpha-D-muramoyl-L-alanyl-gamma-D-glutamyl-meso-2,6-diaminopimelate + ADP + phosphate + H(+). It participates in cell wall biogenesis; peptidoglycan biosynthesis. Catalyzes the addition of meso-diaminopimelic acid to the nucleotide precursor UDP-N-acetylmuramoyl-L-alanyl-D-glutamate (UMAG) in the biosynthesis of bacterial cell-wall peptidoglycan. The protein is UDP-N-acetylmuramoyl-L-alanyl-D-glutamate--2,6-diaminopimelate ligase of Chlamydia abortus (strain DSM 27085 / S26/3) (Chlamydophila abortus).